The following is a 730-amino-acid chain: ATP-dependent DNA helicase Hel308 (730 aa).

ATP is bound by residues Gln28 and 46-53 (IPTASGKT). In terms of domain architecture, Helicase ATP-binding spans 33 to 199 (EKGLLEGKNL…WLDAELVLSE (167 aa)). A DEAH box motif is present at residues 144–147 (DEVH). The Helicase C-terminal domain maps to 232-433 (AVNLVLDTIK…ALRTHILSTI (202 aa)).

This sequence belongs to the helicase family. Hel308 subfamily. As to quaternary structure, monomer.

It carries out the reaction Couples ATP hydrolysis with the unwinding of duplex DNA by translocating in the 3'-5' direction.. The enzyme catalyses ATP + H2O = ADP + phosphate + H(+). Functionally, DNA-dependent ATPase and 3'-5' DNA helicase that may be involved in repair of stalled replication forks. The protein is ATP-dependent DNA helicase Hel308 of Methanosarcina mazei (strain ATCC BAA-159 / DSM 3647 / Goe1 / Go1 / JCM 11833 / OCM 88) (Methanosarcina frisia).